The primary structure comprises 924 residues: Inositol polyphosphate 4-phosphatase type II (924 aa).

Basic and acidic residues predominate over residues 1 to 13 (MEIKEEGASEEGQ). Disordered regions lie at residues 1 to 24 (MEIK…ANDP), 481 to 516 (ILKK…HSDY), and 546 to 570 (DGGS…AIPS). Positions 23 to 165 (DPGDCQFTSI…LKSKEQLLVL (143 aa)) constitute a C2 domain.

The protein belongs to the inositol 3,4-bisphosphate 4-phosphatase family. As to expression, widely expressed with highest levels occurring in the skeletal muscle and heart.

The catalysed reaction is a 1,2-diacyl-sn-glycero-3-phospho-(1D-myo-inositol-3,4-bisphosphate) + H2O = a 1,2-diacyl-sn-glycero-3-phospho-(1D-myo-inositol-3-phosphate) + phosphate. It carries out the reaction 1D-myo-inositol 1,3,4-trisphosphate + H2O = 1D-myo-inositol 1,3-bisphosphate + phosphate. The enzyme catalyses 1D-myo-inositol 3,4-bisphosphate + H2O = 1D-myo-inositol 3-phosphate + phosphate. It functions in the pathway signal transduction; phosphatidylinositol signaling pathway. With respect to regulation, strongly inhibited by inositol hexakisphosphate. Functionally, catalyzes the hydrolysis of the 4-position phosphate of phosphatidylinositol 3,4-bisphosphate, inositol 1,3,4-trisphosphate and inositol 3,4-trisphosphate. Plays a role in the late stages of macropinocytosis by dephosphorylating phosphatidylinositol 3,4-bisphosphate in membrane ruffles. The lipid phosphatase activity is critical for tumor suppressor function. Antagonizes the PI3K-AKT/PKB signaling pathway by dephosphorylating phosphoinositides and thereby modulating cell cycle progression and cell survival. This Homo sapiens (Human) protein is Inositol polyphosphate 4-phosphatase type II (INPP4B).